Consider the following 377-residue polypeptide: tRNA pseudouridine synthase Pus10 (377 aa).

Asp206 serves as the catalytic Nucleophile. Substrate is bound by residues Tyr270 and Tyr339.

It belongs to the pseudouridine synthase Pus10 family.

It catalyses the reaction uridine(54) in tRNA = pseudouridine(54) in tRNA. It carries out the reaction uridine(55) in tRNA = pseudouridine(55) in tRNA. Responsible for synthesis of pseudouridine from uracil-54 and uracil-55 in the psi GC loop of transfer RNAs. This is tRNA pseudouridine synthase Pus10 from Picrophilus torridus (strain ATCC 700027 / DSM 9790 / JCM 10055 / NBRC 100828 / KAW 2/3).